The chain runs to 417 residues: Multifunctional CCA protein (417 aa).

The ATP site is built by Gly8 and Arg11. Positions 8 and 11 each coordinate CTP. 2 residues coordinate Mg(2+): Asp21 and Asp23. ATP is bound by residues Arg91, Arg143, and Arg146. CTP contacts are provided by Arg91, Arg143, and Arg146. The HD domain occupies Thr232–Leu333.

Belongs to the tRNA nucleotidyltransferase/poly(A) polymerase family. Bacterial CCA-adding enzyme type 1 subfamily. Monomer. Can also form homodimers and oligomers. Requires Mg(2+) as cofactor. Ni(2+) is required as a cofactor.

It catalyses the reaction a tRNA precursor + 2 CTP + ATP = a tRNA with a 3' CCA end + 3 diphosphate. The enzyme catalyses a tRNA with a 3' CCA end + 2 CTP + ATP = a tRNA with a 3' CCACCA end + 3 diphosphate. Its function is as follows. Catalyzes the addition and repair of the essential 3'-terminal CCA sequence in tRNAs without using a nucleic acid template. Adds these three nucleotides in the order of C, C, and A to the tRNA nucleotide-73, using CTP and ATP as substrates and producing inorganic pyrophosphate. tRNA 3'-terminal CCA addition is required both for tRNA processing and repair. Also involved in tRNA surveillance by mediating tandem CCA addition to generate a CCACCA at the 3' terminus of unstable tRNAs. While stable tRNAs receive only 3'-terminal CCA, unstable tRNAs are marked with CCACCA and rapidly degraded. The polypeptide is Multifunctional CCA protein (Paraburkholderia phymatum (strain DSM 17167 / CIP 108236 / LMG 21445 / STM815) (Burkholderia phymatum)).